Reading from the N-terminus, the 277-residue chain is Thymidylate synthase (277 aa).

Residue Arg21 coordinates dUMP. A (6R)-5,10-methylene-5,6,7,8-tetrahydrofolate-binding site is contributed by His51. Arg126–Arg127 is a dUMP binding site. Cys159 serves as the catalytic Nucleophile. DUMP-binding positions include Arg179–Asp182, Asn190, and His220–Tyr222. Residue Asp182 coordinates (6R)-5,10-methylene-5,6,7,8-tetrahydrofolate. A (6R)-5,10-methylene-5,6,7,8-tetrahydrofolate-binding site is contributed by Ala276.

It belongs to the thymidylate synthase family. Bacterial-type ThyA subfamily. As to quaternary structure, homodimer.

Its subcellular location is the cytoplasm. It carries out the reaction dUMP + (6R)-5,10-methylene-5,6,7,8-tetrahydrofolate = 7,8-dihydrofolate + dTMP. Its pathway is pyrimidine metabolism; dTTP biosynthesis. Its function is as follows. Catalyzes the reductive methylation of 2'-deoxyuridine-5'-monophosphate (dUMP) to 2'-deoxythymidine-5'-monophosphate (dTMP) while utilizing 5,10-methylenetetrahydrofolate (mTHF) as the methyl donor and reductant in the reaction, yielding dihydrofolate (DHF) as a by-product. This enzymatic reaction provides an intracellular de novo source of dTMP, an essential precursor for DNA biosynthesis. The polypeptide is Thymidylate synthase (Pseudomonas fluorescens (strain SBW25)).